Consider the following 882-residue polypeptide: Cutinase transcription factor 1 beta (882 aa).

A compositionally biased stretch (low complexity) spans 1 to 20; that stretch reads MNAETPEGSAAPPSPASTSA. The tract at residues 1 to 49 is disordered; the sequence is MNAETPEGSAAPPSPASTSAKTVTDKTNKKRASPSGDSEQPTKVTKRRA. The segment at residues 53 to 81 is a DNA-binding region (zn(2)-C6 fungal-type); sequence CVSCRARKVRCDVVEGAPCGNCRWDNVEC. Residues 117–148 are disordered; that stretch reads NPMGMSTADLRRPSSGSAISTSSIDGPSSFLS. The span at 130 to 139 shows a compositional bias: low complexity; the sequence is SSGSAISTSS.

It is found in the nucleus. The sequence is that of Cutinase transcription factor 1 beta (CTF1-BETA) from Fusarium vanettenii (Neocosmospora pisi).